The sequence spans 461 residues: Cysteine--tRNA ligase (461 aa).

Cysteine 29 contacts Zn(2+). Residues 31–41 carry the 'HIGH' region motif; the sequence is MTVYDFCHIGH. Zn(2+) contacts are provided by cysteine 210, histidine 235, and glutamate 239. The short motif at 267 to 271 is the 'KMSKS' region element; it reads KMSKS. Lysine 270 is an ATP binding site.

This sequence belongs to the class-I aminoacyl-tRNA synthetase family. As to quaternary structure, monomer. The cofactor is Zn(2+).

The protein localises to the cytoplasm. It carries out the reaction tRNA(Cys) + L-cysteine + ATP = L-cysteinyl-tRNA(Cys) + AMP + diphosphate. The chain is Cysteine--tRNA ligase from Azotobacter vinelandii (strain DJ / ATCC BAA-1303).